A 482-amino-acid polypeptide reads, in one-letter code: MPSYNHTSNGVNMANFRALGGKNTGRGGTYRAPYEWTLESVEQMGLGATENRMSSTLRDASSQLQAVASATVANDISIVDRALTTKLSQTESLKNMLETCLAEVISEIAELLSTKKRLEERNGKVQAKIGVNSNRMQVRSSRPPREMTMDEVEKGLIKQQGMLGSFSDRVARAVAQVDREVAQLEAVRAKLEADLRDKTEALRVDEAVLSIPTDPTVEGTLSPTFRRGAADCPPKTPHTWVRNTEDNLRNAHHWLADSARLRKAIAHAVANSRATEHDVANRLNENMLAKVAATRNLREDLQAQLEKVREEQARAKGQRSALTSALDDKRGPLAQARERLAVRKARPCRENVNDEVEAALAKEVAHLAAVTQQLSVKVAAVDREIAALDATAAQLESNIADKDDALRVDERVVLLDGRINLAQRPPSSVASFAMSDMSAPRTQTLARIRELEASLTSARREREAMESSIRQLRDTMGGGGAF.

Coiled coils occupy residues 100–129 (CLAEVISEIAELLSTKKRLEERNGKVQAKI), 171–204 (ARAVAQVDREVAQLEAVRAKLEADLRDKTEALRV), 282–324 (RLNE…ALTS), 376–407 (VKVAAVDREIAALDATAAQLESNIADKDDALR), and 441–478 (RTQTLARIRELEASLTSARREREAMESSIRQLRDTMGG). Residues 311 to 330 (EQARAKGQRSALTSALDDKR) are disordered. Asymmetric dimethylarginine is present on R462.

The protein belongs to the tektin family. Post-translationally, asymmetrically dimethylated at Arg-462 during flagellum resorption. Probably methylated by PRMT1.

It is found in the cytoplasm. Its subcellular location is the cytoskeleton. The protein resides in the flagellum axoneme. It localises to the flagellum basal body. Structural component of ciliary and flagellar microtubules. Plays a key role in the assembly or attachment of the inner dynein arm to microtubules in flagella and cilia. Forms filamentous polymers in the walls of ciliary and flagellar microtubules. This is Tektin from Chlamydomonas reinhardtii (Chlamydomonas smithii).